Reading from the N-terminus, the 155-residue chain is Aspartate 1-decarboxylase (155 aa).

Ser24 acts as the Schiff-base intermediate with substrate; via pyruvic acid in catalysis. At Ser24 the chain carries Pyruvic acid (Ser). Position 56 (Thr56) interacts with substrate. The active-site Proton donor is Tyr57. Residue 72 to 74 (GAA) participates in substrate binding.

Belongs to the PanD family. In terms of assembly, heterooctamer of four alpha and four beta subunits. Pyruvate is required as a cofactor. Is synthesized initially as an inactive proenzyme, which is activated by self-cleavage at a specific serine bond to produce a beta-subunit with a hydroxyl group at its C-terminus and an alpha-subunit with a pyruvoyl group at its N-terminus.

Its subcellular location is the cytoplasm. The catalysed reaction is L-aspartate + H(+) = beta-alanine + CO2. Its pathway is cofactor biosynthesis; (R)-pantothenate biosynthesis; beta-alanine from L-aspartate: step 1/1. Functionally, catalyzes the pyruvoyl-dependent decarboxylation of aspartate to produce beta-alanine. This is Aspartate 1-decarboxylase from Methylocella silvestris (strain DSM 15510 / CIP 108128 / LMG 27833 / NCIMB 13906 / BL2).